A 298-amino-acid chain; its full sequence is ATP phosphoribosyltransferase (298 aa).

The protein belongs to the ATP phosphoribosyltransferase family. Long subfamily. It depends on Mg(2+) as a cofactor.

The protein resides in the cytoplasm. It carries out the reaction 1-(5-phospho-beta-D-ribosyl)-ATP + diphosphate = 5-phospho-alpha-D-ribose 1-diphosphate + ATP. Its pathway is amino-acid biosynthesis; L-histidine biosynthesis; L-histidine from 5-phospho-alpha-D-ribose 1-diphosphate: step 1/9. Feedback inhibited by histidine. Its function is as follows. Catalyzes the condensation of ATP and 5-phosphoribose 1-diphosphate to form N'-(5'-phosphoribosyl)-ATP (PR-ATP). Has a crucial role in the pathway because the rate of histidine biosynthesis seems to be controlled primarily by regulation of HisG enzymatic activity. The chain is ATP phosphoribosyltransferase from Aliivibrio fischeri (strain ATCC 700601 / ES114) (Vibrio fischeri).